Consider the following 72-residue polypeptide: Translation initiation factor IF-1 (72 aa).

One can recognise an S1-like domain in the interval 1–72 (MAKDDVIEID…DKGRITFRYK (72 aa)).

Belongs to the IF-1 family. In terms of assembly, component of the 30S ribosomal translation pre-initiation complex which assembles on the 30S ribosome in the order IF-2 and IF-3, IF-1 and N-formylmethionyl-tRNA(fMet); mRNA recruitment can occur at any time during PIC assembly.

Its subcellular location is the cytoplasm. In terms of biological role, one of the essential components for the initiation of protein synthesis. Stabilizes the binding of IF-2 and IF-3 on the 30S subunit to which N-formylmethionyl-tRNA(fMet) subsequently binds. Helps modulate mRNA selection, yielding the 30S pre-initiation complex (PIC). Upon addition of the 50S ribosomal subunit IF-1, IF-2 and IF-3 are released leaving the mature 70S translation initiation complex. This Campylobacter jejuni subsp. doylei (strain ATCC BAA-1458 / RM4099 / 269.97) protein is Translation initiation factor IF-1.